A 128-amino-acid polypeptide reads, in one-letter code: Fluoride-specific ion channel FluC (128 aa).

A run of 4 helical transmembrane segments spans residues 7-29, 36-57, 65-94, and 98-126; these read LNFI…LGLR, PWGT…VALI, AWIR…DMLE, and YATA…VRLL. Residue asparagine 43 coordinates fluoride. Positions 77 and 80 each coordinate Na(+). Residues tyrosine 104, serine 108, and serine 112 each coordinate fluoride.

The protein belongs to the fluoride channel Fluc/FEX (TC 1.A.43) family. Homodimer.

It localises to the cell inner membrane. The catalysed reaction is fluoride(in) = fluoride(out). Na(+) is not transported, but it plays an essential structural role and its presence is essential for fluoride channel function. The Na(+)-binding site is specific for Na(+) over most other cations including K(+) and Mg(2+). Fluoride efflux is inhibited by Li(2+). Its function is as follows. Fluoride-specific ion channel. Important for reducing fluoride concentration in the cell, thus reducing its toxicity. Is highly specific for fluoride ions and cannot transport chloride ions. This is Fluoride-specific ion channel FluC from Bordetella pertussis (strain Tohama I / ATCC BAA-589 / NCTC 13251).